The sequence spans 302 residues: MSHTAEIPMVPGSESPLELKPLKAVDPKTVYHRRAQRLLSLAKDSPLADYFELCRRVVAIQARLAAEADFGQLLAWGKDEAIPLSHLGSEADSYWQGLLQQLLSDLLPQVDEDMARVLRLLMQQSPEQLTSWGSALRQGHMSEVPARFSLFIWAAMGVYWSHWAPMVIKRIDQRKVVQQNLCPICGCHPVASVIVDQPRAGLRYLHCSLCESEWHYIRAHCTSCGQDKGTTLWSFDDAKAQVRIESCDECHGYTKMLFVEKSPLMDVAADDLATLMLDSELNAKGFGATTVNPLLLAHETEQ.

This sequence belongs to the FdhE family.

The protein localises to the cytoplasm. In terms of biological role, necessary for formate dehydrogenase activity. In Shewanella sp. (strain MR-4), this protein is Protein FdhE homolog.